We begin with the raw amino-acid sequence, 504 residues long: L-amino-acid oxidase (504 aa).

A signal peptide spans 1–18; it reads MNVFFMFSLLFLAALGSC. Cys28 and Cys191 form a disulfide bridge. FAD contacts are provided by residues 61 to 62, 81 to 82, Arg89, and 105 to 108; these read MS, EA, and GPMR. Arg108 provides a ligand contact to substrate. The N-linked (GlcNAc...) asparagine glycan is linked to Asn190. His241 is a binding site for substrate. Val279 is an FAD binding site. A disulfide bridge links Cys349 with Cys430. The N-linked (GlcNAc...) asparagine glycan is linked to Asn379. A substrate-binding site is contributed by Tyr390. Residues Glu475 and 482–487 contribute to the FAD site; that span reads GWIDST. Substrate is bound at residue 482-483; it reads GW.

The protein belongs to the flavin monoamine oxidase family. FIG1 subfamily. Homodimer; non-covalently linked. It depends on FAD as a cofactor. In terms of tissue distribution, expressed by the venom gland.

The protein resides in the secreted. It carries out the reaction an L-alpha-amino acid + O2 + H2O = a 2-oxocarboxylate + H2O2 + NH4(+). The catalysed reaction is L-leucine + O2 + H2O = 4-methyl-2-oxopentanoate + H2O2 + NH4(+). Catalyzes an oxidative deamination of predominantly hydrophobic and aromatic L-amino acids, thus producing hydrogen peroxide that may contribute to the diverse toxic effects of this enzyme. Shows activity on L-Leu. Exhibits diverse biological activities, such as hemorrhage, hemolysis, edema, antibacterial and antiparasitic activities, as well as regulation of platelet aggregation. Its effect on platelets is controversial, since it either induces aggregation or inhibits agonist-induced aggregation. These different effects are probably due to different experimental conditions. This protein induces apoptosis of cultured HeLa cells. The sequence is that of L-amino-acid oxidase from Gloydius halys (Chinese water mocassin).